The following is a 243-amino-acid chain: Outer membrane protein A (243 aa).

5 consecutive transmembrane segments (beta stranded) span residues leucine 1–proline 8, leucine 13–glycine 21, proline 48–alanine 57, tryptophan 62–glutamine 69, and methionine 88–arginine 96. 5 tandem repeats follow at residues alanine 104–proline 105, alanine 106–proline 107, alanine 108–proline 109, alanine 110–proline 111, and alanine 112–proline 113. Residues alanine 104–proline 113 form a 5 X 2 AA tandem repeats of A-P region. One can recognise an OmpA-like domain in the interval valine 115 to isoleucine 243. The cysteines at positions 215 and 229 are disulfide-linked.

It belongs to the outer membrane OOP (TC 1.B.6) superfamily. OmpA family. Monomer and homodimer.

It localises to the cell outer membrane. Its function is as follows. With TolR probably plays a role in maintaining the position of the peptidoglycan cell wall in the periplasm. Acts as a porin with low permeability that allows slow penetration of small solutes; an internal gate slows down solute passage. This chain is Outer membrane protein A, found in Serratia odorifera.